Reading from the N-terminus, the 114-residue chain is Protein S100-A9 (114 aa).

Residue Thr2 is modified to Blocked amino end (Thr). Residue Cys3 is modified to S-nitrosocysteine; transient. EF-hand domains follow at residues 12 to 47 (IETIINTFHQYSVKLGHPDTLNQGEFKELVRKDLQN) and 54 to 89 (KNEKVIEHIMEDLDTNADKQLSFEEFIMLMARLTWA). Residue His20 coordinates Zn(2+). Positions 23, 26, and 28 each coordinate Ca(2+). Asp30 provides a ligand contact to Zn(2+). Residues Thr31, Glu36, Asp67, Asn69, Asp71, Gln73, and Glu78 each coordinate Ca(2+). Zn(2+)-binding residues include His91 and His95. Residues 93 to 102 (KMHEGDEGPG) show a composition bias toward basic and acidic residues. A disordered region spans residues 93–114 (KMHEGDEGPGHHHKPGLGEGTP). Pros-methylhistidine is present on His105. Thr113 carries the post-translational modification Phosphothreonine; by MAPK14.

As to quaternary structure, homodimer. Preferentially exists as a heterodimer or heterotetramer with S100A8 known as calprotectin (S100A8/A9). S100A9 interacts with ATP2A2. S100A9 interacts with AGER, and with the heterodimeric complex formed by TLR4 and LY96 in the presence of calcium and/or zinc ions. S100A9 binds quinoline-3-carboxamides in the presence of calcium and/or zinc ions. S100A9 interacts with amyloid-beta protein 40. Calprotectin (S100A8/9) interacts with CEACAM3 and tubulin filaments in a calcium-dependent manner. Heterotetrameric calprotectin (S100A8/A9) interacts with ANXA6 and associates with tubulin filaments in activated monocytes. Calprotectin (S100A8/9) interacts with NCF2/P67PHOX, RAC1, RAC2, CYBA and CYBB. Calprotectin (S100A8/9) interacts with NOS2 to form the iNOS-S100A8/A9 transnitrosylase complex; induced by LDL(ox). Calprotectin (S100A8/9) interacts with CD69. Post-translationally, phosphorylated. Phosphorylation inhibits activation of tubulin polymerization. In terms of processing, S-nitrosylation of Cys-3 is implicated in LDL(ox)-induced S-nitrosylation of GAPDH at 'Cys-247' through a transnitrosylase mechanism involving a iNOS-S100A8/9 complex. Methylation at His-105 by METTL9 reduces zinc-binding without affecting heterodimerization with S100A8. Calprotectin (S100A8/9) is predominantly expressed in myeloid cells. Except for inflammatory conditions, the expression is restricted to a specific stage of myeloid differentiation since both proteins are expressed in circulating neutrophils and monocytes but are absent in normal tissue macrophages and lymphocytes. Under chronic inflammatory conditions, such as psoriasis and malignant disorders, also expressed in the epidermis. Found in high concentrations at local sites of inflammation or in the serum of patients with inflammatory diseases such as rheumatoid, cystic fibrosis, inflammatory bowel disease, Crohn's disease, giant cell arteritis, cystic fibrosis, Sjogren's syndrome, systemic lupus erythematosus, and progressive systemic sclerosis. Involved in the formation and deposition of amyloids in the aging prostate known as corpora amylacea inclusions. Strongly up-regulated in many tumors, including gastric, esophageal, colon, pancreatic, bladder, ovarian, thyroid, breast and skin cancers.

The protein resides in the secreted. The protein localises to the cytoplasm. It localises to the cytoskeleton. Its subcellular location is the cell membrane. S100A9 is a calcium- and zinc-binding protein which plays a prominent role in the regulation of inflammatory processes and immune response. It can induce neutrophil chemotaxis, adhesion, can increase the bactericidal activity of neutrophils by promoting phagocytosis via activation of SYK, PI3K/AKT, and ERK1/2 and can induce degranulation of neutrophils by a MAPK-dependent mechanism. Predominantly found as calprotectin (S100A8/A9) which has a wide plethora of intra- and extracellular functions. The intracellular functions include: facilitating leukocyte arachidonic acid trafficking and metabolism, modulation of the tubulin-dependent cytoskeleton during migration of phagocytes and activation of the neutrophilic NADPH-oxidase. Also participates in regulatory T-cell differentiation together with CD69. Activates NADPH-oxidase by facilitating the enzyme complex assembly at the cell membrane, transferring arachidonic acid, an essential cofactor, to the enzyme complex and S100A8 contributes to the enzyme assembly by directly binding to NCF2/P67PHOX. The extracellular functions involve pro-inflammatory, antimicrobial, oxidant-scavenging and apoptosis-inducing activities. Its pro-inflammatory activity includes recruitment of leukocytes, promotion of cytokine and chemokine production, and regulation of leukocyte adhesion and migration. Acts as an alarmin or a danger associated molecular pattern (DAMP) molecule and stimulates innate immune cells via binding to pattern recognition receptors such as Toll-like receptor 4 (TLR4) and receptor for advanced glycation endproducts (AGER). Binding to TLR4 and AGER activates the MAP-kinase and NF-kappa-B signaling pathways resulting in the amplification of the pro-inflammatory cascade. Has antimicrobial activity towards bacteria and fungi and exerts its antimicrobial activity probably via chelation of Zn(2+) which is essential for microbial growth. Can induce cell death via autophagy and apoptosis and this occurs through the cross-talk of mitochondria and lysosomes via reactive oxygen species (ROS) and the process involves BNIP3. Can regulate neutrophil number and apoptosis by an anti-apoptotic effect; regulates cell survival via ITGAM/ITGB and TLR4 and a signaling mechanism involving MEK-ERK. Its role as an oxidant scavenger has a protective role in preventing exaggerated tissue damage by scavenging oxidants. Can act as a potent amplifier of inflammation in autoimmunity as well as in cancer development and tumor spread. Has transnitrosylase activity; in oxidatively-modified low-densitity lipoprotein (LDL(ox))-induced S-nitrosylation of GAPDH on 'Cys-247' proposed to transfer the NO moiety from NOS2/iNOS to GAPDH via its own S-nitrosylated Cys-3. The iNOS-S100A8/A9 transnitrosylase complex is proposed to also direct selective inflammatory stimulus-dependent S-nitrosylation of multiple targets such as ANXA5, EZR, MSN and VIM by recognizing a [IL]-x-C-x-x-[DE] motif. This Homo sapiens (Human) protein is Protein S100-A9.